Reading from the N-terminus, the 248-residue chain is Isopentenyl phosphate kinase (248 aa).

7–11 (KLGGS) is an ATP binding site. Glycine 49 provides a ligand contact to substrate. Glycine 50 lines the ATP pocket. Substrate-binding residues include histidine 54 and glycine 152. Residues glycine 209 and lysine 213 each coordinate ATP.

This sequence belongs to the isopentenyl phosphate kinase family. As to quaternary structure, homodimer.

It catalyses the reaction isopentenyl phosphate + ATP = isopentenyl diphosphate + ADP. Its function is as follows. Catalyzes the phosphorylation of isopentenyl phosphate (IP) to isopentenyl diphosphate (IPP). Functions in an alternate mevalonate (MVA) pathway leading to IPP, a key precursor for the biosynthesis of isoprenoid compounds such as archaeal membrane lipids. In Haloferax volcanii (strain ATCC 29605 / DSM 3757 / JCM 8879 / NBRC 14742 / NCIMB 2012 / VKM B-1768 / DS2) (Halobacterium volcanii), this protein is Isopentenyl phosphate kinase.